Here is a 208-residue protein sequence, read N- to C-terminus: MESLSKYKLVFLGDQSVGKTSIITRFMYDTFDITYQATIGIDFLSKTMYLEDRTVRLQLWDTAGQERFRSLIPSYIRDSSVAIVVYDITNKVSFTNTIKWIEDVRNERGNNVVIMLVGNKTDLADKRQVSIEEGEAKAKEYDIMFTETSAKAGFNIKALFRKVASALPGIDSNSMTKNQHEIISEVDITDGGKPALKEGDGFCSSSRC.

Residues 14–21 (DQSVGKTS), Thr38, 62–66 (TAGQE), and 120–123 (KTDL) each bind GTP. The S-geranylgeranyl cysteine moiety is linked to residue Cys208.

Belongs to the small GTPase superfamily. Rab family.

Functionally, protein transport. Probably involved in vesicular traffic. The sequence is that of Ras-related protein Rab-6 (rab6) from Dictyostelium discoideum (Social amoeba).